Reading from the N-terminus, the 555-residue chain is Potassium-transporting ATPase potassium-binding subunit (555 aa).

The next 10 membrane-spanning stretches (helical) occupy residues 2–22 (IWVA…PTGV), 60–80 (QYAL…YFIF), 130–150 (IGIT…VMAF), 173–193 (VFLP…VPQT), 246–266 (MSNI…PFTY), 278–298 (ILFV…TTSE), 374–394 (AGFV…GLMV), 412–432 (LIAV…ALAL), 483–503 (LVMF…AASL), and 525–545 (GIFI…MLVL).

The protein belongs to the KdpA family. The system is composed of three essential subunits: KdpA, KdpB and KdpC.

It is found in the cell membrane. Functionally, part of the high-affinity ATP-driven potassium transport (or Kdp) system, which catalyzes the hydrolysis of ATP coupled with the electrogenic transport of potassium into the cytoplasm. This subunit binds the extracellular potassium ions and delivers the ions to the membrane domain of KdpB through an intramembrane tunnel. The protein is Potassium-transporting ATPase potassium-binding subunit of Bacillus cereus (strain B4264).